The following is a 156-amino-acid chain: Methylated-DNA--protein-cysteine methyltransferase (156 aa).

The Nucleophile; methyl group acceptor role is filled by Cys120.

It belongs to the MGMT family.

It is found in the cytoplasm. It catalyses the reaction a 6-O-methyl-2'-deoxyguanosine in DNA + L-cysteinyl-[protein] = S-methyl-L-cysteinyl-[protein] + a 2'-deoxyguanosine in DNA. It carries out the reaction a 4-O-methyl-thymidine in DNA + L-cysteinyl-[protein] = a thymidine in DNA + S-methyl-L-cysteinyl-[protein]. Functionally, involved in the cellular defense against the biological effects of O6-methylguanine (O6-MeG) and O4-methylthymine (O4-MeT) in DNA. Repairs the methylated nucleobase in DNA by stoichiometrically transferring the methyl group to a cysteine residue in the enzyme. This is a suicide reaction: the enzyme is irreversibly inactivated. This chain is Methylated-DNA--protein-cysteine methyltransferase, found in Sulfurisphaera tokodaii (strain DSM 16993 / JCM 10545 / NBRC 100140 / 7) (Sulfolobus tokodaii).